Here is a 374-residue protein sequence, read N- to C-terminus: Ribosomal RNA large subunit methyltransferase G (374 aa).

Belongs to the methyltransferase superfamily. RlmG family.

It localises to the cytoplasm. It catalyses the reaction guanosine(1835) in 23S rRNA + S-adenosyl-L-methionine = N(2)-methylguanosine(1835) in 23S rRNA + S-adenosyl-L-homocysteine + H(+). In terms of biological role, specifically methylates the guanine in position 1835 (m2G1835) of 23S rRNA. This chain is Ribosomal RNA large subunit methyltransferase G, found in Pseudomonas entomophila (strain L48).